A 159-amino-acid chain; its full sequence is Elicitor-responsive protein 1 (159 aa).

The region spanning 1 to 112 is the C2 domain; it reads MAGSGVLEVH…SLGMEHGTWE (112 aa). Positions 21 and 30 each coordinate Ca(2+). Residue S44 is modified to Phosphoserine; by CPK. Ca(2+) is bound by residues D81, D83, S86, and D89.

The cofactor is Ca(2+). In terms of processing, phosphorylated at Ser-44 by CPK18 in a calcium-dependent manner. Isoform 2 is expressed in young vascular tissues and tiller buds.

It localises to the cytoplasm. It is found in the cell membrane. Functionally, may play a role in plant defense signaling. Isoform 2 binds to phospholipids in a Ca(2+)-dependent manner in response to pathogen elicitors. This chain is Elicitor-responsive protein 1 (ERG1), found in Oryza sativa subsp. japonica (Rice).